A 273-amino-acid chain; its full sequence is Acetyl-coenzyme A carboxylase carboxyl transferase subunit alpha (273 aa).

In terms of domain architecture, CoA carboxyltransferase C-terminal spans 1-244 (MKKATQSKAW…KVVLKQALDE (244 aa)).

Belongs to the AccA family. As to quaternary structure, acetyl-CoA carboxylase is a heterohexamer composed of biotin carboxyl carrier protein (AccB), biotin carboxylase (AccC) and two subunits each of ACCase subunit alpha (AccA) and ACCase subunit beta (AccD).

It localises to the cytoplasm. The catalysed reaction is N(6)-carboxybiotinyl-L-lysyl-[protein] + acetyl-CoA = N(6)-biotinyl-L-lysyl-[protein] + malonyl-CoA. Its pathway is lipid metabolism; malonyl-CoA biosynthesis; malonyl-CoA from acetyl-CoA: step 1/1. Component of the acetyl coenzyme A carboxylase (ACC) complex. First, biotin carboxylase catalyzes the carboxylation of biotin on its carrier protein (BCCP) and then the CO(2) group is transferred by the carboxyltransferase to acetyl-CoA to form malonyl-CoA. The chain is Acetyl-coenzyme A carboxylase carboxyl transferase subunit alpha from Acinetobacter baumannii (strain ACICU).